A 765-amino-acid polypeptide reads, in one-letter code: Eukaryotic translation initiation factor 3 subunit B (765 aa).

Residues Met1 to Asp136 are sufficient for interaction with HCR1 and TIF32. Residues Arg28 to Phe261 are sufficient for interaction with PIC8. Residue Ser61 is modified to Phosphoserine. The residue at position 67 (Tyr67) is a Phosphotyrosine. In terms of domain architecture, RRM spans Gln77 to Asp162. Ser671 is subject to Phosphoserine.

This sequence belongs to the eIF-3 subunit B family. As to quaternary structure, component of the eukaryotic translation initiation factor 3 (eIF-3) complex.

It localises to the cytoplasm. Its function is as follows. RNA-binding component of the eukaryotic translation initiation factor 3 (eIF-3) complex, which is involved in protein synthesis of a specialized repertoire of mRNAs and, together with other initiation factors, stimulates binding of mRNA and methionyl-tRNAi to the 40S ribosome. The eIF-3 complex specifically targets and initiates translation of a subset of mRNAs involved in cell proliferation. In Saccharomyces cerevisiae (strain YJM789) (Baker's yeast), this protein is Eukaryotic translation initiation factor 3 subunit B.